Here is a 101-residue protein sequence, read N- to C-terminus: MRSISVGLDREESGSDGLCLGLVVLATLAAGFVAGSDVLRCRGFGPATGDVCLWVGAGFWRCPLPGGGADGQGPGFWDAALREARMFCRSCVGLRMIGWRR.

This is an uncharacterized protein from Encephalitozoon cuniculi (strain GB-M1) (Microsporidian parasite).